A 247-amino-acid polypeptide reads, in one-letter code: Pyrroloquinoline-quinone synthase (247 aa).

The protein belongs to the PqqC family.

The enzyme catalyses 6-(2-amino-2-carboxyethyl)-7,8-dioxo-1,2,3,4,7,8-hexahydroquinoline-2,4-dicarboxylate + 3 O2 = pyrroloquinoline quinone + 2 H2O2 + 2 H2O + H(+). It functions in the pathway cofactor biosynthesis; pyrroloquinoline quinone biosynthesis. Functionally, ring cyclization and eight-electron oxidation of 3a-(2-amino-2-carboxyethyl)-4,5-dioxo-4,5,6,7,8,9-hexahydroquinoline-7,9-dicarboxylic-acid to PQQ. The sequence is that of Pyrroloquinoline-quinone synthase from Rhizobium rhizogenes (strain K84 / ATCC BAA-868) (Agrobacterium radiobacter).